The primary structure comprises 391 residues: Casein kinase II subunit alpha (391 aa).

Residues 36-41 (QDDYQL) are interaction with beta subunit. The 286-residue stretch at 39-324 (YQLVRKLGRG…AREAMEHPYF (286 aa)) folds into the Protein kinase domain. Residues 45 to 53 (LGRGKYSEV) and Lys68 each bind ATP. Asp156 (proton acceptor) is an active-site residue. A phosphothreonine; by CDK1 mark is found at Thr344 and Thr360. A phosphoserine; by CDK1 mark is found at Ser362 and Ser370.

It belongs to the protein kinase superfamily. Ser/Thr protein kinase family. CK2 subfamily. Heterotetramer composed of two catalytic subunits (alpha chain and/or alpha' chain) and two regulatory subunits (beta chains). The tetramer can exist as a combination of 2 alpha/2 beta, 2 alpha'/2 beta or 1 alpha/1 alpha'/2 beta subunits. Also part of a CK2-SPT16-SSRP1 complex composed of SSRP1, SUPT16H, CSNK2A1, CSNK2A2 and CSNK2B, which forms following UV irradiation. Interacts with RNPS1. Interacts with SNAI1. Interacts with PML. Interacts with CCAR2. Interacts with HIRIP3. In terms of processing, phosphorylated at Thr-344, Thr-360, Ser-362 and Ser-370 by CDK1 in prophase and metaphase and dephosphorylated during anaphase. Phosphorylation does not directly affect casein kinase 2 activity, but may contribute to its regulation by forming binding sites for interacting proteins and/or targeting it to different compartments.

The protein resides in the nucleus. It catalyses the reaction L-seryl-[protein] + ATP = O-phospho-L-seryl-[protein] + ADP + H(+). It carries out the reaction L-threonyl-[protein] + ATP = O-phospho-L-threonyl-[protein] + ADP + H(+). With respect to regulation, constitutively active protein kinase whose activity is not directly affected by phosphorylation. Seems to be regulated by level of expression and localization. Its function is as follows. Catalytic subunit of a constitutively active serine/threonine-protein kinase complex that phosphorylates a large number of substrates containing acidic residues C-terminal to the phosphorylated serine or threonine. Regulates numerous cellular processes, such as cell cycle progression, apoptosis and transcription, as well as viral infection. May act as a regulatory node which integrates and coordinates numerous signals leading to an appropriate cellular response. During mitosis, functions as a component of the p53/TP53-dependent spindle assembly checkpoint (SAC) that maintains cyclin-B-CDK1 activity and G2 arrest in response to spindle damage. Also required for p53/TP53-mediated apoptosis, phosphorylating 'Ser-392' of p53/TP53 following UV irradiation. Phosphorylates a number of DNA repair proteins in response to DNA damage, such as MDC1, MRE11, RAD9A, RAD51 and HTATSF1, promoting their recruitment to DNA damage sites. Can also negatively regulate apoptosis. Phosphorylates the caspases CASP9 and CASP2 and the apoptotic regulator NOL3. Phosphorylation protects CASP9 from cleavage and activation by CASP8, and inhibits the dimerization of CASP2 and activation of CASP8. Phosphorylates YY1, protecting YY1 from cleavage by CASP7 during apoptosis. Regulates transcription by direct phosphorylation of RNA polymerases I, II, III and IV. Also phosphorylates and regulates numerous transcription factors including NF-kappa-B, STAT1, CREB1, IRF1, IRF2, ATF1, ATF4, SRF, MAX, JUN, FOS, MYC and MYB. Phosphorylates Hsp90 and its co-chaperones FKBP4 and CDC37, which is essential for chaperone function. Mediates sequential phosphorylation of FNIP1, promoting its gradual interaction with Hsp90, leading to activate both kinase and non-kinase client proteins of Hsp90. Regulates Wnt signaling by phosphorylating CTNNB1 and the transcription factor LEF1. Acts as an ectokinase that phosphorylates several extracellular proteins. Phosphorylates PML at 'Ser-565' and primes it for ubiquitin-mediated degradation. Plays an important role in the circadian clock function by phosphorylating BMAL1 at 'Ser-90' which is pivotal for its interaction with CLOCK and which controls CLOCK nuclear entry. Phosphorylates FMR1, promoting FMR1-dependent formation of a membraneless compartment. May phosphorylate histone H2A on 'Ser-1'. This is Casein kinase II subunit alpha (Csnk2a1) from Mus musculus (Mouse).